The chain runs to 390 residues: Elongation factor Ts, mitochondrial (390 aa).

Belongs to the EF-Ts family.

It localises to the mitochondrion. Its function is as follows. Associates with the EF-Tu.GDP complex and induces the exchange of GDP to GTP. It remains bound to the aminoacyl-tRNA.EF-Tu.GTP complex up to the GTP hydrolysis stage on the ribosome. This Plasmodium falciparum (isolate 3D7) protein is Elongation factor Ts, mitochondrial.